A 164-amino-acid chain; its full sequence is NADH-quinone oxidoreductase subunit C (164 aa).

Belongs to the complex I 30 kDa subunit family. NDH-1 is composed of 14 different subunits. Subunits NuoB, C, D, E, F, and G constitute the peripheral sector of the complex.

The protein resides in the cell inner membrane. The enzyme catalyses a quinone + NADH + 5 H(+)(in) = a quinol + NAD(+) + 4 H(+)(out). NDH-1 shuttles electrons from NADH, via FMN and iron-sulfur (Fe-S) centers, to quinones in the respiratory chain. The immediate electron acceptor for the enzyme in this species is believed to be ubiquinone. Couples the redox reaction to proton translocation (for every two electrons transferred, four hydrogen ions are translocated across the cytoplasmic membrane), and thus conserves the redox energy in a proton gradient. This chain is NADH-quinone oxidoreductase subunit C, found in Geotalea uraniireducens (strain Rf4) (Geobacter uraniireducens).